The primary structure comprises 271 residues: Formamidopyrimidine-DNA glycosylase (271 aa).

Residue P2 is the Schiff-base intermediate with DNA of the active site. The active-site Proton donor is the E3. Residue K58 is the Proton donor; for beta-elimination activity of the active site. DNA contacts are provided by H92, R111, and R152. The segment at 237 to 271 (MVYGREGEACRHCGGELKHATIGQRATVWCAACQR) adopts an FPG-type zinc-finger fold. R261 serves as the catalytic Proton donor; for delta-elimination activity.

Belongs to the FPG family. In terms of assembly, monomer. It depends on Zn(2+) as a cofactor.

It carries out the reaction Hydrolysis of DNA containing ring-opened 7-methylguanine residues, releasing 2,6-diamino-4-hydroxy-5-(N-methyl)formamidopyrimidine.. The enzyme catalyses 2'-deoxyribonucleotide-(2'-deoxyribose 5'-phosphate)-2'-deoxyribonucleotide-DNA = a 3'-end 2'-deoxyribonucleotide-(2,3-dehydro-2,3-deoxyribose 5'-phosphate)-DNA + a 5'-end 5'-phospho-2'-deoxyribonucleoside-DNA + H(+). Its function is as follows. Involved in base excision repair of DNA damaged by oxidation or by mutagenic agents. Acts as a DNA glycosylase that recognizes and removes damaged bases. Has a preference for oxidized purines, such as 7,8-dihydro-8-oxoguanine (8-oxoG). Has AP (apurinic/apyrimidinic) lyase activity and introduces nicks in the DNA strand. Cleaves the DNA backbone by beta-delta elimination to generate a single-strand break at the site of the removed base with both 3'- and 5'-phosphates. This Xanthomonas campestris pv. campestris (strain ATCC 33913 / DSM 3586 / NCPPB 528 / LMG 568 / P 25) protein is Formamidopyrimidine-DNA glycosylase.